The following is a 488-amino-acid chain: Prostaglandin E2 receptor EP4 subtype (488 aa).

Residues 1–19 (MSIPGVNASFSSTPERLNS) are Extracellular-facing. An N-linked (GlcNAc...) asparagine glycan is attached at asparagine 7. The helical transmembrane segment at 20–43 (PVTIPAVMFIFGVVGNLVAIVVLC) threads the bilayer. At 44-55 (KSRKEQKETTFY) the chain is on the cytoplasmic side. A helical transmembrane segment spans residues 56-79 (TLVCGLAVTDLLGTLLVSPVTIAT). Residues 80–96 (YMKGQWPGDQALCDYST) lie on the Extracellular side of the membrane. An intrachain disulfide couples cysteine 92 to cysteine 170. Residues 97 to 115 (FILLFFGLSGLSIICAMSI) form a helical membrane-spanning segment. Residues 116-135 (ERYLAINHAYFYSHYVDKRL) are Cytoplasmic-facing. A helical membrane pass occupies residues 136-160 (AGLTLFAVYASNVLFCALPNMGLGR). At 161-184 (SERQYPGTWCFIDWTTNVTAYAAF) the chain is on the extracellular side. Residues 185–211 (SYMYAGFSSFLILATVLCNVLVCGALL) form a helical membrane-spanning segment. Residues 212–270 (RMLRQFMRRTSLGTEQHHAAAAAAVASVACRGHAAASPALQRLSDFRRRRSFRRIAGAE) lie on the Cytoplasmic side of the membrane. A helical membrane pass occupies residues 271-298 (IQMVILLIATSLVVLICSIPLVVRVFIN). Residues 299–315 (QLYQPSVVKDISRNPDL) lie on the Extracellular side of the membrane. A helical transmembrane segment spans residues 316 to 335 (QAIRIASVNPILDPWIYILL). Topologically, residues 336-488 (RKTVLSKAIE…ETLKLSEKCI (153 aa)) are cytoplasmic. A disordered region spans residues 358–380 (GRDGSAQHCSESRRTSSAMSGHS). Phosphoserine occurs at positions 377, 380, 382, and 385.

This sequence belongs to the G-protein coupled receptor 1 family. Interacts with FEM1A. Phosphorylation mediates agonist-mediated desensitization by promoting cytoplasmic retention.

The protein localises to the cell membrane. Functionally, receptor for prostaglandin E2 (PGE2). The activity of this receptor is mediated by G(s) proteins that stimulate adenylate cyclase. Has a relaxing effect on smooth muscle. May play an important role in regulating renal hemodynamics, intestinal epithelial transport, adrenal aldosterone secretion, and uterine function. The polypeptide is Prostaglandin E2 receptor EP4 subtype (Ptger4) (Rattus norvegicus (Rat)).